We begin with the raw amino-acid sequence, 255 residues long: MVLSSKNDQPDHLFAAPIEKLGDWAFDEQVAAVFPNMITRSIPGYTNIITMIGMLSKRFVKPHTQIYDLGCSHGAACLSIYPNILDIPSCKIIAVEESPAMIKYCRENLMAHCDQIPIEIIEDDILNIKIDNASMVILNFTLQFLDPGHRENVLNRIYQGLNPGGILVLSEKFHFEDPDIGPLLFDMHHDFKRAHGYSDLEISQKSTMLKNVMRIDSVETHQNRLRQAGFEQMDLWFQCFNFGSLLALKTSSSND.

Residues tyrosine 45, 70–72 (GCS), 124–125 (DI), and asparagine 139 contribute to the S-adenosyl-L-methionine site.

The protein belongs to the class I-like SAM-binding methyltransferase superfamily. Cx-SAM synthase family. As to quaternary structure, homodimer.

The catalysed reaction is prephenate + S-adenosyl-L-methionine = carboxy-S-adenosyl-L-methionine + 3-phenylpyruvate + H2O. Catalyzes the conversion of S-adenosyl-L-methionine (SAM) to carboxy-S-adenosyl-L-methionine (Cx-SAM). The sequence is that of Carboxy-S-adenosyl-L-methionine synthase from Hamiltonella defensa subsp. Acyrthosiphon pisum (strain 5AT).